A 131-amino-acid polypeptide reads, in one-letter code: C-glycoside deglycosidase beta subunit (131 aa).

Belongs to the C-glycoside deglycosidase beta subunit family. In terms of assembly, heterodimer composed of an alpha subunit (CarB1) and a beta subunit (CarC1). The cofactor is Mg(2+).

The catalysed reaction is 3''-dehydroisovitexin = 1,5-anhydro-D-erythro-hex-1-en-3-ulose + apigenin. Its activity is regulated as follows. Activity is strongly reduced in the presence of chelating agents. Carbon-carbon bond-cleaving enzyme which participates in the metabolism of C-glycosides. Acts on the C6-glycosylated compound 3''-dehydroisovitexin (3''-oxo-isovitexin). Shows weak activity with 3''-dehydroisoorientin (3''-oxo-homoorientin) and 3'-dehydromangiferin (3'-oxo-mangiferin). In Arthrobacter globiformis (strain ATCC 8010 / DSM 20124 / JCM 1332 / NBRC 12137 / NCIMB 8907 / NRRL B-2979 / 168), this protein is C-glycoside deglycosidase beta subunit.